Consider the following 120-residue polypeptide: Jacalin-related lectin 39 (120 aa).

Residues 6–120 (SRDHADFVAH…KRTFDFGGFN (115 aa)) form the Jacalin-type lectin domain.

It belongs to the jacalin lectin family.

This is Jacalin-related lectin 39 (JAL39) from Arabidopsis thaliana (Mouse-ear cress).